The primary structure comprises 166 residues: NADH-quinone oxidoreductase subunit B 1 (166 aa).

Residues Cys-39, Cys-40, Cys-106, and Cys-135 each contribute to the [4Fe-4S] cluster site.

The protein belongs to the complex I 20 kDa subunit family. NDH-1 is composed of 14 different subunits. Subunits NuoB, C, D, E, F, and G constitute the peripheral sector of the complex. It depends on [4Fe-4S] cluster as a cofactor.

The protein resides in the cell membrane. It carries out the reaction a quinone + NADH + 5 H(+)(in) = a quinol + NAD(+) + 4 H(+)(out). NDH-1 shuttles electrons from NADH, via FMN and iron-sulfur (Fe-S) centers, to quinones in the respiratory chain. The immediate electron acceptor for the enzyme in this species is believed to be a menaquinone. Couples the redox reaction to proton translocation (for every two electrons transferred, four hydrogen ions are translocated across the cytoplasmic membrane), and thus conserves the redox energy in a proton gradient. The protein is NADH-quinone oxidoreductase subunit B 1 of Symbiobacterium thermophilum (strain DSM 24528 / JCM 14929 / IAM 14863 / T).